The sequence spans 400 residues: Golgin-45 (400 aa).

The span at 1 to 16 shows a compositional bias: polar residues; the sequence is MTTKNLETKVTVTSSP. Positions 1–58 are disordered; it reads MTTKNLETKVTVTSSPIRGAGDGMETEEPPKSVEVTSGVQSRKHHSLQSPWKKAVPSE. At Ser-15 the chain carries Phosphoserine. A Tankyrase-binding motif motif is present at residues 18 to 22; that stretch reads RGAGD. Ser-49 bears the Phosphoserine mark. Residues 120-213 adopt a coiled-coil conformation; the sequence is NKELSEVKNV…QLERMSIQCD (94 aa). Thr-348 is modified (phosphothreonine). Ser-353 is modified (phosphoserine). The tract at residues 394 to 400 is essential for interaction with GORASP2; it reads RGELIAL.

As to quaternary structure, interacts with GORASP2. Interacts with the GTP-bound form of RAB2, but not with other Golgi Rab proteins. Identified in a complex with RAB2 and GORASP2. In terms of processing, ADP-ribosylated by tankyrase TNKS and TNKS2. Poly-ADP-ribosylated protein is recognized by RNF146, followed by ubiquitination. Ubiquitinated by RNF146 when poly-ADP-ribosylated, leading to its degradation. Detected in adrenal gland.

It is found in the golgi apparatus membrane. Its subcellular location is the nucleus. The protein localises to the cytoplasm. Functionally, required for normal Golgi structure and for protein transport from the endoplasmic reticulum (ER) through the Golgi apparatus to the cell surface. The polypeptide is Golgin-45 (BLZF1) (Homo sapiens (Human)).